The following is a 201-amino-acid chain: 3-isopropylmalate dehydratase small subunit (201 aa).

The protein belongs to the LeuD family. LeuD type 1 subfamily. In terms of assembly, heterodimer of LeuC and LeuD.

It carries out the reaction (2R,3S)-3-isopropylmalate = (2S)-2-isopropylmalate. The protein operates within amino-acid biosynthesis; L-leucine biosynthesis; L-leucine from 3-methyl-2-oxobutanoate: step 2/4. Its function is as follows. Catalyzes the isomerization between 2-isopropylmalate and 3-isopropylmalate, via the formation of 2-isopropylmaleate. This is 3-isopropylmalate dehydratase small subunit from Klebsiella pneumoniae (strain 342).